A 206-amino-acid polypeptide reads, in one-letter code: Sclerostin domain-containing protein 1 (206 aa).

The first 23 residues, 1 to 23 (MLPPAIHFYLLPLACILMKSCLA), serve as a signal peptide directing secretion. N-linked (GlcNAc...) asparagine glycosylation is present at asparagine 47. Disulfide bonds link cysteine 75-cysteine 133, cysteine 89-cysteine 147, cysteine 100-cysteine 163, and cysteine 104-cysteine 165. Residues 75–170 (CRELRSTKYI…TACKCKRYTR (96 aa)) form the CTCK domain. Asparagine 173 carries an N-linked (GlcNAc...) asparagine glycan. The disordered stretch occupies residues 176–206 (SHNFESMSPAKPVQHHRERKRASKSSKHSMS). A compositionally biased stretch (basic residues) spans 188 to 206 (VQHHRERKRASKSSKHSMS).

The protein belongs to the sclerostin family. In terms of assembly, interacts with BMP2, BMP4, BMP6 and BMP7 with high affinity.

It is found in the secreted. Directly antagonizes activity of BMP2, BMP4, BMP6 and BMP7 in a dose-dependent manner. Enhances Wnt signaling and inhibits TGF-beta signaling. May be involved in the onset of endometrial receptivity for implantation/sensitization for the decidual cell reaction. The polypeptide is Sclerostin domain-containing protein 1 (SOSTDC1) (Pongo abelii (Sumatran orangutan)).